The chain runs to 404 residues: Cysteine desulfurase IscS (404 aa).

Residues 75–76 (AT), asparagine 155, glutamine 183, and 203–205 (SGH) each bind pyridoxal 5'-phosphate. Position 206 is an N6-(pyridoxal phosphate)lysine (lysine 206). Threonine 243 serves as a coordination point for pyridoxal 5'-phosphate. Cysteine 328 serves as the catalytic Cysteine persulfide intermediate. Residue cysteine 328 coordinates [2Fe-2S] cluster.

Belongs to the class-V pyridoxal-phosphate-dependent aminotransferase family. NifS/IscS subfamily. In terms of assembly, homodimer. Forms a heterotetramer with IscU, interacts with other sulfur acceptors. Pyridoxal 5'-phosphate is required as a cofactor.

Its subcellular location is the cytoplasm. It carries out the reaction (sulfur carrier)-H + L-cysteine = (sulfur carrier)-SH + L-alanine. It participates in cofactor biosynthesis; iron-sulfur cluster biosynthesis. In terms of biological role, master enzyme that delivers sulfur to a number of partners involved in Fe-S cluster assembly, tRNA modification or cofactor biosynthesis. Catalyzes the removal of elemental sulfur atoms from cysteine to produce alanine. Functions as a sulfur delivery protein for Fe-S cluster synthesis onto IscU, an Fe-S scaffold assembly protein, as well as other S acceptor proteins. In Mannheimia succiniciproducens (strain KCTC 0769BP / MBEL55E), this protein is Cysteine desulfurase IscS.